Reading from the N-terminus, the 229-residue chain is Uracil-DNA glycosylase (229 aa).

The active-site Proton acceptor is the Asp-64.

Belongs to the uracil-DNA glycosylase (UDG) superfamily. UNG family.

The protein resides in the cytoplasm. The catalysed reaction is Hydrolyzes single-stranded DNA or mismatched double-stranded DNA and polynucleotides, releasing free uracil.. Functionally, excises uracil residues from the DNA which can arise as a result of misincorporation of dUMP residues by DNA polymerase or due to deamination of cytosine. This chain is Uracil-DNA glycosylase, found in Klebsiella pneumoniae (strain 342).